A 383-amino-acid chain; its full sequence is Acetylornithine deacetylase (383 aa).

A Zn(2+)-binding site is contributed by His-80. Asp-82 is an active-site residue. A Zn(2+)-binding site is contributed by Asp-112. Glu-144 is an active-site residue. Zn(2+) contacts are provided by Glu-145, Glu-169, and His-355.

Belongs to the peptidase M20A family. ArgE subfamily. As to quaternary structure, homodimer. Zn(2+) is required as a cofactor. It depends on Co(2+) as a cofactor. Glutathione serves as cofactor.

It is found in the cytoplasm. It catalyses the reaction N(2)-acetyl-L-ornithine + H2O = L-ornithine + acetate. It functions in the pathway amino-acid biosynthesis; L-arginine biosynthesis; L-ornithine from N(2)-acetyl-L-ornithine (linear): step 1/1. Catalyzes the hydrolysis of the amide bond of N(2)-acetylated L-amino acids. Cleaves the acetyl group from N-acetyl-L-ornithine to form L-ornithine, an intermediate in L-arginine biosynthesis pathway, and a branchpoint in the synthesis of polyamines. The chain is Acetylornithine deacetylase from Shigella flexneri serotype 5b (strain 8401).